A 331-amino-acid chain; its full sequence is UPF0324 membrane protein SAS0317 (331 aa).

A run of 11 helical transmembrane segments spans residues 9 to 26, 31 to 48, 69 to 88, 93 to 115, 122 to 144, 154 to 176, 183 to 202, 217 to 234, 247 to 269, 273 to 295, and 308 to 330; these read FMIG…SFLA, ILDK…AILY, LLRF…DIIG, LLAI…NKLL, ALLL…APIF, SIGI…YAIF, YGAW…LAGG, LGRV…ILIM, ISIP…VTIP, LNIL…GLNV, and LMTI…HWLY.

Belongs to the UPF0324 family.

It localises to the cell membrane. In Staphylococcus aureus (strain MSSA476), this protein is UPF0324 membrane protein SAS0317.